The sequence spans 382 residues: Pyrimidine monooxygenase RutA (382 aa).

FMN contacts are provided by residues 68-69 (IK), asparagine 134, glutamate 143, 159-160 (RY), and serine 209.

It belongs to the NtaA/SnaA/DszA monooxygenase family. RutA subfamily.

It catalyses the reaction uracil + FMNH2 + NADH + O2 = (Z)-3-ureidoacrylate + FMN + NAD(+) + H2O + H(+). The enzyme catalyses thymine + FMNH2 + NADH + O2 = (Z)-2-methylureidoacrylate + FMN + NAD(+) + H2O + H(+). In terms of biological role, catalyzes the pyrimidine ring opening between N-3 and C-4 by an unusual flavin hydroperoxide-catalyzed mechanism, adding oxygen atoms in the process to yield ureidoacrylate peracid, that immediately reacts with FMN forming ureidoacrylate and FMN-N(5)-oxide. The FMN-N(5)-oxide reacts spontaneously with NADH to produce FMN. Requires the flavin reductase RutF to regenerate FMN in vivo. The polypeptide is Pyrimidine monooxygenase RutA (Escherichia coli (strain K12 / MC4100 / BW2952)).